Consider the following 387-residue polypeptide: uncharacterized protein (387 aa).

To M.jannaschii MJ0043 N-terminal region.

This is an uncharacterized protein from Bacillus subtilis (strain 168).